We begin with the raw amino-acid sequence, 324 residues long: NADH-ubiquinone oxidoreductase chain 1 (324 aa).

The next 8 membrane-spanning stretches (helical) occupy residues 9–29, 76–96, 106–126, 146–166, 177–197, 228–248, 259–279, and 299–319; these read LINP…LTLL, LFLV…APMP, LGVL…LGSG, ISYE…WGGY, ALWL…STLA, LLFL…AILF, ELTT…FLWV, and FLPL…AFAG.

The protein belongs to the complex I subunit 1 family.

Its subcellular location is the mitochondrion inner membrane. It carries out the reaction a ubiquinone + NADH + 5 H(+)(in) = a ubiquinol + NAD(+) + 4 H(+)(out). Functionally, core subunit of the mitochondrial membrane respiratory chain NADH dehydrogenase (Complex I) that is believed to belong to the minimal assembly required for catalysis. Complex I functions in the transfer of electrons from NADH to the respiratory chain. The immediate electron acceptor for the enzyme is believed to be ubiquinone. In Formosania lacustris (Oriental stream loach), this protein is NADH-ubiquinone oxidoreductase chain 1 (MT-ND1).